A 283-amino-acid polypeptide reads, in one-letter code: Phosphatidylserine decarboxylase proenzyme (283 aa).

Catalysis depends on charge relay system; for autoendoproteolytic cleavage activity residues Asp89, His146, and Ser249. Ser249 functions as the Schiff-base intermediate with substrate; via pyruvic acid; for decarboxylase activity in the catalytic mechanism. Ser249 carries the pyruvic acid (Ser); by autocatalysis modification.

The protein belongs to the phosphatidylserine decarboxylase family. PSD-B subfamily. Prokaryotic type I sub-subfamily. As to quaternary structure, heterodimer of a large membrane-associated beta subunit and a small pyruvoyl-containing alpha subunit. The cofactor is pyruvate. Is synthesized initially as an inactive proenzyme. Formation of the active enzyme involves a self-maturation process in which the active site pyruvoyl group is generated from an internal serine residue via an autocatalytic post-translational modification. Two non-identical subunits are generated from the proenzyme in this reaction, and the pyruvate is formed at the N-terminus of the alpha chain, which is derived from the carboxyl end of the proenzyme. The autoendoproteolytic cleavage occurs by a canonical serine protease mechanism, in which the side chain hydroxyl group of the serine supplies its oxygen atom to form the C-terminus of the beta chain, while the remainder of the serine residue undergoes an oxidative deamination to produce ammonia and the pyruvoyl prosthetic group on the alpha chain. During this reaction, the Ser that is part of the protease active site of the proenzyme becomes the pyruvoyl prosthetic group, which constitutes an essential element of the active site of the mature decarboxylase.

The protein resides in the cell membrane. It catalyses the reaction a 1,2-diacyl-sn-glycero-3-phospho-L-serine + H(+) = a 1,2-diacyl-sn-glycero-3-phosphoethanolamine + CO2. It functions in the pathway phospholipid metabolism; phosphatidylethanolamine biosynthesis; phosphatidylethanolamine from CDP-diacylglycerol: step 2/2. In terms of biological role, catalyzes the formation of phosphatidylethanolamine (PtdEtn) from phosphatidylserine (PtdSer). This Legionella pneumophila subsp. pneumophila (strain Philadelphia 1 / ATCC 33152 / DSM 7513) protein is Phosphatidylserine decarboxylase proenzyme.